The chain runs to 448 residues: Receptor homology region, transmembrane domain- and RING domain-containing protein 2 (448 aa).

The first 20 residues, 1–20 (MNRALVLLLYVCTVSCLASS), serve as a signal peptide directing secretion. Residues 21–163 (KVILMRNNIT…IPSFENSAWS (143 aa)) are Lumenal-facing. N-linked (GlcNAc...) asparagine glycans are attached at residues Asn-28 and Asn-74. The region spanning 60–144 (DACQNLMNKP…ETGEVLKEYA (85 aa)) is the PA domain. An intrachain disulfide couples Cys-62 to Cys-87. The helical transmembrane segment at 164–184 (IMAVSFISLLAMSAVLATCFF) threads the bilayer. The Cytoplasmic portion of the chain corresponds to 185–448 (VRRHRIRRRT…YASANSLPDC (264 aa)). The RING-type; atypical zinc-finger motif lies at 232–274 (CAICLEDYTVGDKLRLLPCCHKFHAACVDSWLTSWRTFCPVCK). Low complexity predominate over residues 344–378 (QSSSNRRSPPISVSRSSVDLRQQAASPSPSPSQRS). 2 disordered regions span residues 344 to 380 (QSSS…RSYI) and 402 to 424 (MSPY…NYPL). The span at 408–423 (SPSNASPAMAGSSNYP) shows a compositional bias: polar residues.

Its subcellular location is the protein storage vacuole membrane. It is found in the golgi apparatus membrane. Involved in the trafficking of vacuolar proteins. May function as a sorting receptor for protein trafficking to the protein storage vacuole (PSV). This is Receptor homology region, transmembrane domain- and RING domain-containing protein 2 (RMR2) from Arabidopsis thaliana (Mouse-ear cress).